The chain runs to 692 residues: Formate hydrogenlyase transcriptional activator (692 aa).

A GAF domain is found at 202 to 344; that stretch reads DIDELVSEVA…QIAERVAIAV (143 aa). Positions 381 to 610 constitute a Sigma-54 factor interaction domain; that stretch reads IIGRSEAMYN…LENVVERAVL (230 aa). ATP is bound by residues 409–416 and 472–481; these read GETGTGKE and ADKSSLFLDE. The H-T-H motif DNA-binding region spans 663 to 682; it reads PKGAAQRLGLKRTTLLSRMK.

In terms of biological role, required for induction of expression of the formate dehydrogenase H and hydrogenase-3 structural genes. This is Formate hydrogenlyase transcriptional activator (fhlA) from Salmonella typhimurium (strain LT2 / SGSC1412 / ATCC 700720).